The chain runs to 704 residues: Elongation factor G (704 aa).

A tr-type G domain is found at 8-290; it reads ARYRNIGISA…AVIDYLPAPT (283 aa). Residues 17–24, 88–92, and 142–145 each bind GTP; these read AHIDAGKT, DTPGH, and NKMD.

The protein belongs to the TRAFAC class translation factor GTPase superfamily. Classic translation factor GTPase family. EF-G/EF-2 subfamily.

It localises to the cytoplasm. Its function is as follows. Catalyzes the GTP-dependent ribosomal translocation step during translation elongation. During this step, the ribosome changes from the pre-translocational (PRE) to the post-translocational (POST) state as the newly formed A-site-bound peptidyl-tRNA and P-site-bound deacylated tRNA move to the P and E sites, respectively. Catalyzes the coordinated movement of the two tRNA molecules, the mRNA and conformational changes in the ribosome. This chain is Elongation factor G, found in Pectobacterium atrosepticum (strain SCRI 1043 / ATCC BAA-672) (Erwinia carotovora subsp. atroseptica).